The chain runs to 220 residues: Ribosomal RNA small subunit methyltransferase Nep1 (220 aa).

S-adenosyl-L-methionine-binding positions include glycine 178, glycine 183, and 196-201 (LYREPL).

Belongs to the class IV-like SAM-binding methyltransferase superfamily. RNA methyltransferase NEP1 family. As to quaternary structure, homodimer.

The enzyme catalyses a pseudouridine in rRNA + S-adenosyl-L-methionine = an N(1)-methylpseudouridine in rRNA + S-adenosyl-L-homocysteine + H(+). Methyltransferase involved in ribosomal biogenesis. Specifically catalyzes the N1-methylation of the pseudouridine corresponding to position 914 in M.jannaschii 16S rRNA. The chain is Ribosomal RNA small subunit methyltransferase Nep1 from Thermococcus kodakarensis (strain ATCC BAA-918 / JCM 12380 / KOD1) (Pyrococcus kodakaraensis (strain KOD1)).